A 388-amino-acid chain; its full sequence is Methylthioribose-1-phosphate isomerase (388 aa).

D258 functions as the Proton donor in the catalytic mechanism.

The protein belongs to the eIF-2B alpha/beta/delta subunits family. MtnA subfamily.

The protein resides in the cytoplasm. It localises to the nucleus. The catalysed reaction is 5-(methylsulfanyl)-alpha-D-ribose 1-phosphate = 5-(methylsulfanyl)-D-ribulose 1-phosphate. The protein operates within amino-acid biosynthesis; L-methionine biosynthesis via salvage pathway; L-methionine from S-methyl-5-thio-alpha-D-ribose 1-phosphate: step 1/6. Its function is as follows. Catalyzes the interconversion of methylthioribose-1-phosphate (MTR-1-P) into methylthioribulose-1-phosphate (MTRu-1-P). The polypeptide is Methylthioribose-1-phosphate isomerase (mri-1) (Neurospora crassa (strain ATCC 24698 / 74-OR23-1A / CBS 708.71 / DSM 1257 / FGSC 987)).